The primary structure comprises 87 residues: MSASADSLAAAASLDKYGDEDIFSLLIRYGLYVGALFQFVCISAAVLMENNPDSQSNPETGEVTEREGEPVRTRLHKIRKLEKKKRR.

Residues 25 to 47 (LLIRYGLYVGALFQFVCISAAVL) traverse the membrane as a helical segment. Residues 50–87 (NNPDSQSNPETGEVTEREGEPVRTRLHKIRKLEKKKRR) form a disordered region. The span at 63–72 (VTEREGEPVR) shows a compositional bias: basic and acidic residues. Residues 73-87 (TRLHKIRKLEKKKRR) are compositionally biased toward basic residues.

This sequence belongs to the UPF0239 family.

The protein localises to the membrane. This is Protein anon-73B1 (anon-73B1) from Drosophila simulans (Fruit fly).